We begin with the raw amino-acid sequence, 493 residues long: Guanosine-5'-triphosphate,3'-diphosphate pyrophosphatase (493 aa).

This sequence belongs to the GppA/Ppx family. GppA subfamily.

It catalyses the reaction guanosine 3'-diphosphate 5'-triphosphate + H2O = guanosine 3',5'-bis(diphosphate) + phosphate + H(+). Its pathway is purine metabolism; ppGpp biosynthesis; ppGpp from GTP: step 2/2. Its function is as follows. Catalyzes the conversion of pppGpp to ppGpp. Guanosine pentaphosphate (pppGpp) is a cytoplasmic signaling molecule which together with ppGpp controls the 'stringent response', an adaptive process that allows bacteria to respond to amino acid starvation, resulting in the coordinated regulation of numerous cellular activities. The chain is Guanosine-5'-triphosphate,3'-diphosphate pyrophosphatase from Salmonella heidelberg (strain SL476).